The chain runs to 115 residues: Replication initiation control protein YabA (115 aa).

Residues histidine 85, cysteine 87, cysteine 101, and cysteine 104 each contribute to the Zn(2+) site.

It belongs to the YabA family. As to quaternary structure, homotetramer. Interacts with both DnaA and DnaN, acting as a bridge between these two proteins. Zn(2+) serves as cofactor.

It localises to the cytoplasm. The protein resides in the nucleoid. Functionally, involved in control of chromosome replication initiation. Inhibits the cooperative binding of DnaA to the oriC region, thus negatively regulating initiation of chromosome replication. Inhibits the ability of DnaA-ATP to form a helix on DNA; does not disassemble preformed DnaA-DNA helices. Decreases the residence time of DnaA on the chromosome at its binding sites (oriC, replication forks and promoter-binding sites). Tethers DnaA to the replication machinery via the DNA polymerase beta sliding clamp subunit (dnaN). Associates with oriC and other DnaA targets on the chromosome in a DnaA-dependent manner. The polypeptide is Replication initiation control protein YabA (Lactiplantibacillus plantarum (strain ATCC BAA-793 / NCIMB 8826 / WCFS1) (Lactobacillus plantarum)).